We begin with the raw amino-acid sequence, 179 residues long: Acireductone dioxygenase (179 aa).

His99, His101, Glu105, and His144 together coordinate Fe(2+). Residues His99, His101, Glu105, and His144 each coordinate Ni(2+).

The protein belongs to the acireductone dioxygenase (ARD) family. In terms of assembly, monomer. Requires Fe(2+) as cofactor. The cofactor is Ni(2+).

The enzyme catalyses 1,2-dihydroxy-5-(methylsulfanyl)pent-1-en-3-one + O2 = 3-(methylsulfanyl)propanoate + CO + formate + 2 H(+). It carries out the reaction 1,2-dihydroxy-5-(methylsulfanyl)pent-1-en-3-one + O2 = 4-methylsulfanyl-2-oxobutanoate + formate + 2 H(+). It functions in the pathway amino-acid biosynthesis; L-methionine biosynthesis via salvage pathway; L-methionine from S-methyl-5-thio-alpha-D-ribose 1-phosphate: step 5/6. Its function is as follows. Catalyzes 2 different reactions between oxygen and the acireductone 1,2-dihydroxy-3-keto-5-methylthiopentene (DHK-MTPene) depending upon the metal bound in the active site. Fe-containing acireductone dioxygenase (Fe-ARD) produces formate and 2-keto-4-methylthiobutyrate (KMTB), the alpha-ketoacid precursor of methionine in the methionine recycle pathway. Ni-containing acireductone dioxygenase (Ni-ARD) produces methylthiopropionate, carbon monoxide and formate, and does not lie on the methionine recycle pathway. This is Acireductone dioxygenase from Exiguobacterium sibiricum (strain DSM 17290 / CCUG 55495 / CIP 109462 / JCM 13490 / 255-15).